We begin with the raw amino-acid sequence, 423 residues long: MSYVIDRRLNGKNKSTVNRQRFLRRYREHIKKAVEEAVSRRSIMDMEHGEQISIPGRDIDEPVLHHGRGGKQTIVHPGNKEFTAGEHIARPQGGGGGGGRGKAGNSGEGMDDFVFQITQEEFLEFMFEDLELPNLVKRHLTGTDTFKTVRAGIANEGNPSRINIVRTLRSAHARRIALTGSSRALLREAQKELERLKVEEPDNFTDIRETEIEIERLKARINRLPFLDTFDLKYNLLIKQPNPSSKAVMFCLMDVSGSMTQATKDIAKRFFILLYLFLKRNYDRIEVVFIRHHTSAREVDEEEFFYSRETGGTIVSSALKMMQEIMADRYPASDWNIYAAQASDGDNWNDDSPICRDILANQIMPHVQYYTYVEITPREHQALWYEYERIGEAYPDTFAQQQLVSAGDIYPVFRELFQRRLAT.

The interval 85–107 (GEHIARPQGGGGGGGRGKAGNSG) is disordered. Residues 92 to 107 (QGGGGGGGRGKAGNSG) are compositionally biased toward gly residues.

The protein belongs to the UPF0229 family.

This is UPF0229 protein PSEEN0423 from Pseudomonas entomophila (strain L48).